The following is a 434-amino-acid chain: Nicotinate phosphoribosyltransferase (434 aa).

Histidine 242 carries the post-translational modification Phosphohistidine; by autocatalysis.

This sequence belongs to the NAPRTase family. In terms of processing, transiently phosphorylated on a His residue during the reaction cycle. Phosphorylation strongly increases the affinity for substrates and increases the rate of nicotinate D-ribonucleotide production. Dephosphorylation regenerates the low-affinity form of the enzyme, leading to product release.

It carries out the reaction nicotinate + 5-phospho-alpha-D-ribose 1-diphosphate + ATP + H2O = nicotinate beta-D-ribonucleotide + ADP + phosphate + diphosphate. It participates in cofactor biosynthesis; NAD(+) biosynthesis; nicotinate D-ribonucleotide from nicotinate: step 1/1. In terms of biological role, catalyzes the synthesis of beta-nicotinate D-ribonucleotide from nicotinate and 5-phospho-D-ribose 1-phosphate at the expense of ATP. The chain is Nicotinate phosphoribosyltransferase from Allorhizobium ampelinum (strain ATCC BAA-846 / DSM 112012 / S4) (Agrobacterium vitis (strain S4)).